The chain runs to 771 residues: Carnitine O-palmitoyltransferase 1, muscle isoform (771 aa).

Residues 1 to 47 (MAEAHQAVAFQFTVTPEGVDFQLSREVLKHIYLSVIRSWKKRLIRIK) are Cytoplasmic-facing. Residues 48–73 (NGILRGVYPGSPTSWLVVVMATAGSS) form a helical membrane-spanning segment. Residues 74 to 101 (YYNVDISMGLVYYIQRWLPEGRPYRTPY) lie on the Mitochondrial intermembrane side of the membrane. A helical membrane pass occupies residues 102 to 121 (TRTLFSMAIFSTGVWMMGIF). Residues 122-771 (FFRQTLKLLL…NLFQVPKADG (650 aa)) lie on the Cytoplasmic side of the membrane. The active-site Proton acceptor is histidine 472. 554 to 566 (GKGLIKKCRTSPD) lines the CoA pocket. Residues tyrosine 588 and threonine 601 each coordinate (R)-carnitine.

The protein belongs to the carnitine/choline acetyltransferase family.

The protein resides in the mitochondrion outer membrane. It carries out the reaction (R)-carnitine + hexadecanoyl-CoA = O-hexadecanoyl-(R)-carnitine + CoA. Its pathway is lipid metabolism; fatty acid beta-oxidation. Catalyzes the transfer of the acyl group of long-chain fatty acid-CoA conjugates onto carnitine, an essential step for the mitochondrial uptake of long-chain fatty acids and their subsequent beta-oxidation in the mitochondrion. The protein is Carnitine O-palmitoyltransferase 1, muscle isoform (CPT1B) of Bos taurus (Bovine).